The sequence spans 161 residues: Transcriptional regulator MraZ (161 aa).

SpoVT-AbrB domains follow at residues 7-55 (RYTN…GPAF) and 84-127 (SAEL…EPGA).

It belongs to the MraZ family. In terms of assembly, forms oligomers.

Its subcellular location is the cytoplasm. The protein localises to the nucleoid. In Parvibaculum lavamentivorans (strain DS-1 / DSM 13023 / NCIMB 13966), this protein is Transcriptional regulator MraZ.